Reading from the N-terminus, the 342-residue chain is Ketoreductase nvfG (342 aa).

It belongs to the NAD(P)-dependent epimerase/dehydratase family. Dihydroflavonol-4-reductase subfamily.

It functions in the pathway secondary metabolite biosynthesis; terpenoid biosynthesis. Its function is as follows. Ketoreductase; part of the gene cluster that mediates the biosynthesis of novofumigatonin, a heavily oxygenated meroterpenoid containing a unique orthoester moiety. The first step of the pathway is the synthesis of 3,5-dimethylorsellinic acid (DMOA) by the polyketide synthase nvfA via condensation of one acetyl-CoA starter unit with 3 malonyl-CoA units and 2 methylations. DMOA is then converted to farnesyl-DMOA by the farnesyltransferase nvfB. Epoxydation by FAD-dependent monooxygenase nvfK, followed by a protonation-initiated cyclization catalyzed by the terpene cyclase nvfL leads to the production of asnavolin H. The short chain dehydrogenase nvfC then as a 3-OH dehydrogenase of asnovolin H to yield chemesin D. There are two branches to synthesize asnovolin A from chemesin D. In one branch, chemesin D undergoes Baeyer-Villiger oxidation by nvfH, methylation by nvfJ, and enoyl reduction by the nvfM D enoylreductase that reduces the double bond between C-5'and C-6', to form respectively asnovolin I, asnovolin K, and asnovolin A. In the other branch, the methylation precedes the Baeyer-Villiger oxidation and the enoyl reduction to yield asnovolin A via the asnovolin J intermediate. Asnovolin A is further converted to fumigatonoid A by the Fe(II)/2-oxoglutarate-dependent dioxygenase nvfI that catalyzes an endoperoxidation reaction. The alpha/beta hydrolase nvfD then acts as an epimerase that converts fumigatonoid A to its C-5' epimer, which then undergoes spontaneous or nvfD-catalyzed lactonization. The following step utilizes the ketoreductase nvfG to produce fumigatonoid B. The dioxygenase nvfE further converts fumigatonoid B into fumigatonoid C. Finally the Fe(II)/2-oxoglutarate-dependent dioxygenase nvfF catalyzes two rounds of oxidation to transform fumigatonoid C into the end product, novofumigatonin A. The polypeptide is Ketoreductase nvfG (Aspergillus novofumigatus (strain IBT 16806)).